The following is a 1735-amino-acid chain: Cadherin-AgCad1 (1735 aa).

Positions M1–C30 are cleaved as a signal peptide. Topologically, residues Q31–Q1574 are extracellular. The interval V166–R1456 is extracellular domain (EC). Cadherin domains follow at residues F171–F273, E280–I378, Y379–F498, G499–I620, T621–F757, S767–H866, E879–L983, E985–I1109, G1136–F1235, A1255–F1350, and Q1351–F1461. 2 short sequence motifs (toxin-binding receptor motif) span residues N1344–F1350 and A1446–R1456. The tract at residues G1358–A1569 is CR11-MPED, increases toxicity of activated Cry4B toxin, peptide alone is not toxic. The interval V1457–A1569 is membrane-proximal EC domain (MPED). Residues I1575–F1595 traverse the membrane as a helical segment. Topologically, residues F1596–F1735 are cytoplasmic. The segment covering S1701 to S1719 has biased composition (polar residues). The tract at residues S1701 to F1735 is disordered. A compositionally biased stretch (basic and acidic residues) spans K1722–F1735.

In terms of tissue distribution, larval midgut (at protein level).

It is found in the apical cell membrane. Its subcellular location is the cell projection. The protein localises to the microvillus membrane. Functionally, cadherins are calcium-dependent cell adhesion proteins. They preferentially interact with themselves in a homophilic manner in connecting cells. Its function is as follows. (Microbial infection) Binds to and is probably the functional receptor for B.thuringiensis subsp. israelensis (Bti) insecticidal toxin Cry4B. Trichoplusia ni insect cells stably transfected with this protein become suspectible to Cry4B; cells undergo oncosis, they bleb and ruffle after 20-40 minutes, swell after 40-60 minutes and lyse after 90 minutes. Following toxin treatment in the T.in insect system levels of intracellular 3',5'-cyclic AMP (cAMP) rise 12.5-fold; EDTA but not EGTA pretreatment prevents cAMP increase. Inorganic phosphate also rises 3.4-fold after toxin treatment. This is Cadherin-AgCad1 from Anopheles gambiae (African malaria mosquito).